Here is a 346-residue protein sequence, read N- to C-terminus: GTPase Obg (346 aa).

Residues 1-159 (MKFLDEAKVY…RWIWLRLKLI (159 aa)) form the Obg domain. In terms of domain architecture, OBG-type G spans 160–327 (ADAGLVGLPN…ALRALVAVIG (168 aa)). Residues 166-173 (GLPNAGKS), 191-195 (FTTLH), 212-215 (DIPG), 279-282 (NKID), and 308-310 (SAA) each bind GTP. Residues serine 173 and threonine 193 each contribute to the Mg(2+) site.

The protein belongs to the TRAFAC class OBG-HflX-like GTPase superfamily. OBG GTPase family. In terms of assembly, monomer. It depends on Mg(2+) as a cofactor.

The protein resides in the cytoplasm. Its function is as follows. An essential GTPase which binds GTP, GDP and possibly (p)ppGpp with moderate affinity, with high nucleotide exchange rates and a fairly low GTP hydrolysis rate. Plays a role in control of the cell cycle, stress response, ribosome biogenesis and in those bacteria that undergo differentiation, in morphogenesis control. This is GTPase Obg from Bradyrhizobium diazoefficiens (strain JCM 10833 / BCRC 13528 / IAM 13628 / NBRC 14792 / USDA 110).